A 455-amino-acid polypeptide reads, in one-letter code: Kynurenine 3-monooxygenase (455 aa).

This sequence belongs to the aromatic-ring hydroxylase family. KMO subfamily. It depends on FAD as a cofactor.

It carries out the reaction L-kynurenine + NADPH + O2 + H(+) = 3-hydroxy-L-kynurenine + NADP(+) + H2O. Its pathway is cofactor biosynthesis; NAD(+) biosynthesis; quinolinate from L-kynurenine: step 1/3. In terms of biological role, catalyzes the hydroxylation of L-kynurenine (L-Kyn) to form 3-hydroxy-L-kynurenine (L-3OHKyn). Required for synthesis of quinolinic acid. The sequence is that of Kynurenine 3-monooxygenase from Xanthomonas oryzae pv. oryzae (strain MAFF 311018).